The sequence spans 529 residues: Probable bifunctional tRNA threonylcarbamoyladenosine biosynthesis protein (529 aa).

The tract at residues 1–324 is kae1; it reads MIVLGLEGTA…FRIDEVDAPW (324 aa). Histidine 107, histidine 111, and tyrosine 128 together coordinate Fe cation. L-threonylcarbamoyladenylate is bound by residues 128 to 132, aspartate 160, glycine 173, glutamate 177, and asparagine 257; that span reads YVSGG. A Fe cation-binding site is contributed by aspartate 285. A Protein kinase domain is found at 329-529; sequence SRKDYGKAGA…SAIRRRHRYV (201 aa). ATP contacts are provided by residues 335–342 and lysine 355; that span reads KAGAESRI. The active-site Proton acceptor; for kinase activity is the aspartate 447.

This sequence in the N-terminal section; belongs to the KAE1 / TsaD family. The protein in the C-terminal section; belongs to the protein kinase superfamily. Tyr protein kinase family. BUD32 subfamily. Component of the KEOPS complex that consists of Kae1, Bud32, Cgi121 and Pcc1; the whole complex dimerizes. Fe(2+) serves as cofactor.

Its subcellular location is the cytoplasm. The enzyme catalyses L-seryl-[protein] + ATP = O-phospho-L-seryl-[protein] + ADP + H(+). It catalyses the reaction L-threonyl-[protein] + ATP = O-phospho-L-threonyl-[protein] + ADP + H(+). The catalysed reaction is L-threonylcarbamoyladenylate + adenosine(37) in tRNA = N(6)-L-threonylcarbamoyladenosine(37) in tRNA + AMP + H(+). Its function is as follows. Required for the formation of a threonylcarbamoyl group on adenosine at position 37 (t(6)A37) in tRNAs that read codons beginning with adenine. Is a component of the KEOPS complex that is probably involved in the transfer of the threonylcarbamoyl moiety of threonylcarbamoyl-AMP (TC-AMP) to the N6 group of A37. The Kae1 domain likely plays a direct catalytic role in this reaction. The Bud32 domain probably displays kinase activity that regulates Kae1 function. The polypeptide is Probable bifunctional tRNA threonylcarbamoyladenosine biosynthesis protein (Thermoplasma acidophilum (strain ATCC 25905 / DSM 1728 / JCM 9062 / NBRC 15155 / AMRC-C165)).